We begin with the raw amino-acid sequence, 418 residues long: D-amino acid dehydrogenase (418 aa).

3-17 (VLVLGAGVVGTTSAW) is a binding site for FAD.

This sequence belongs to the DadA oxidoreductase family. FAD is required as a cofactor.

The enzyme catalyses a D-alpha-amino acid + A + H2O = a 2-oxocarboxylate + AH2 + NH4(+). Its pathway is amino-acid degradation; D-alanine degradation; NH(3) and pyruvate from D-alanine: step 1/1. Oxidative deamination of D-amino acids. The polypeptide is D-amino acid dehydrogenase (Dechloromonas aromatica (strain RCB)).